We begin with the raw amino-acid sequence, 77 residues long: U14-theraphotoxin-Cg1a 1 (77 aa).

An N-terminal signal peptide occupies residues 1-21 (MKTSVLLVILGIAAITVQCTA). The propeptide occupies 22–49 (SESVEQDSLRTFVDAVLGWNAEMASEAR). Cystine bridges form between Cys-50/Cys-64, Cys-57/Cys-69, and Cys-63/Cys-75. Lys-77 carries the post-translational modification Lysine amide.

Belongs to the neurotoxin 10 (Hwtx-1) family. 65 (Jztx-21) subfamily. Expressed by the venom gland.

The protein localises to the secreted. Probable ion channel inhibitor. In Chilobrachys guangxiensis (Chinese earth tiger tarantula), this protein is U14-theraphotoxin-Cg1a 1.